The following is a 342-amino-acid chain: S-adenosylmethionine:tRNA ribosyltransferase-isomerase (342 aa).

This sequence belongs to the QueA family. As to quaternary structure, monomer.

The protein localises to the cytoplasm. It carries out the reaction 7-aminomethyl-7-carbaguanosine(34) in tRNA + S-adenosyl-L-methionine = epoxyqueuosine(34) in tRNA + adenine + L-methionine + 2 H(+). It participates in tRNA modification; tRNA-queuosine biosynthesis. In terms of biological role, transfers and isomerizes the ribose moiety from AdoMet to the 7-aminomethyl group of 7-deazaguanine (preQ1-tRNA) to give epoxyqueuosine (oQ-tRNA). The polypeptide is S-adenosylmethionine:tRNA ribosyltransferase-isomerase (Campylobacter jejuni subsp. jejuni serotype O:6 (strain 81116 / NCTC 11828)).